A 393-amino-acid polypeptide reads, in one-letter code: Chalcone synthase DII (393 aa).

Cys-164 is an active-site residue.

This sequence belongs to the thiolase-like superfamily. Chalcone/stilbene synthases family.

It catalyses the reaction (E)-4-coumaroyl-CoA + 3 malonyl-CoA + 3 H(+) = 2',4,4',6'-tetrahydroxychalcone + 3 CO2 + 4 CoA. Its pathway is secondary metabolite biosynthesis; flavonoid biosynthesis. Its function is as follows. The primary product of this enzyme is 4,2',4',6'-tetrahydroxychalcone (also termed naringenin-chalcone or chalcone) which can under specific conditions spontaneously isomerize into naringenin. In Ipomoea batatas (Sweet potato), this protein is Chalcone synthase DII (CHS-DII).